The primary structure comprises 385 residues: Neuropeptide Y receptor type 2 (385 aa).

Topologically, residues 1–54 (MGPLEAIGEENQTDEMKMELFTKLYLPRYTTPVSELALDPKPELKDSTTLVEVQ) are extracellular. Asn11 carries N-linked (GlcNAc...) asparagine glycosylation. The chain crosses the membrane as a helical span at residues 55–75 (IILIFAYCSIILLGVIGNSLV). The Cytoplasmic segment spans residues 76–90 (IHVIIKFKSMRTVTN). Residues 91 to 111 (FFIANLAVADLLVNTLCLPFT) form a helical membrane-spanning segment. Residues 112–128 (LVYTLLGEWKLGPVLCH) are Extracellular-facing. A disulfide bond links Cys127 and Cys207. The helical transmembrane segment at 129–149 (LVPYAQALAVHVSTVTLTVIA) threads the bilayer. Residues 150-169 (LDRHRCIVYHLESKISKRIS) are Cytoplasmic-facing. The helical transmembrane segment at 170-190 (FLIIGVAWAVSALLASPLAIF) threads the bilayer. The Extracellular segment spans residues 191–221 (REYSLIEIIPDFKIVVCSEKWPGEGQLNYGT). The chain crosses the membrane as a helical span at residues 222 to 242 (IYSVSMLLIQYVLPLAIISYA). Over 243–273 (YTRIWTKLKNHVSPGAGNDHYHHRRQKTTKM) the chain is Cytoplasmic. A helical membrane pass occupies residues 274–294 (LVCVVVVFAVSWLPFHAFQLV). Topologically, residues 295–308 (SDIDSQVLDLKEYK) are extracellular. Residues 309-329 (LIYTVFHVIAMCSTFANPLLY) traverse the membrane as a helical segment. The Cytoplasmic segment spans residues 330-385 (GWMNNNYRTAFLTAFQCEQRLDSIHPEVSAAFKARKKLEAKKSQFPGDSFTQPTNV). The S-palmitoyl cysteine moiety is linked to residue Cys346.

It belongs to the G-protein coupled receptor 1 family.

The protein localises to the cell membrane. Its function is as follows. Receptor for neuropeptide Y and peptide YY. This chain is Neuropeptide Y receptor type 2 (NPY2R), found in Gallus gallus (Chicken).